A 354-amino-acid chain; its full sequence is UDP-N-acetylglucosamine--N-acetylmuramyl-(pentapeptide) pyrophosphoryl-undecaprenol N-acetylglucosamine transferase (354 aa).

Residues 15-17 (TGG), asparagine 127, arginine 163, serine 191, isoleucine 242, 261-266 (ALTVSE), and glutamine 286 contribute to the UDP-N-acetyl-alpha-D-glucosamine site.

The protein belongs to the glycosyltransferase 28 family. MurG subfamily.

It localises to the cell inner membrane. It carries out the reaction di-trans,octa-cis-undecaprenyl diphospho-N-acetyl-alpha-D-muramoyl-L-alanyl-D-glutamyl-meso-2,6-diaminopimeloyl-D-alanyl-D-alanine + UDP-N-acetyl-alpha-D-glucosamine = di-trans,octa-cis-undecaprenyl diphospho-[N-acetyl-alpha-D-glucosaminyl-(1-&gt;4)]-N-acetyl-alpha-D-muramoyl-L-alanyl-D-glutamyl-meso-2,6-diaminopimeloyl-D-alanyl-D-alanine + UDP + H(+). It participates in cell wall biogenesis; peptidoglycan biosynthesis. Cell wall formation. Catalyzes the transfer of a GlcNAc subunit on undecaprenyl-pyrophosphoryl-MurNAc-pentapeptide (lipid intermediate I) to form undecaprenyl-pyrophosphoryl-MurNAc-(pentapeptide)GlcNAc (lipid intermediate II). This Pasteurella multocida (strain Pm70) protein is UDP-N-acetylglucosamine--N-acetylmuramyl-(pentapeptide) pyrophosphoryl-undecaprenol N-acetylglucosamine transferase.